We begin with the raw amino-acid sequence, 1007 residues long: Glucose transport transcription regulator RGT1 (1007 aa).

Residues 1-11 are compositionally biased toward polar residues; it reads MLSALIQNGMS. The interval 1–115 is disordered; that stretch reads MLSALIQNGM…ESRRRSKVSR (115 aa). A compositionally biased stretch (low complexity) spans 21-33; that stretch reads NNTTNGSSSTTDN. Composition is skewed to polar residues over residues 42 to 65, 74 to 83, and 96 to 105; these read NTEN…SKQD, TPRSINTGAS, and VSSNVSTATT. The segment at residues 117–151 is a DNA-binding region (zn(2)-C6 fungal-type); that stretch reads CDQCRKKKIKCDFIEGHDINPDQSCTGCRKIGEKC. Disordered stretches follow at residues 155 to 224, 267 to 350, 399 to 423, and 462 to 496; these read RIPL…ATST, QRRP…SAIP, LQQQ…SNGG, and AEVE…QNLP. Polar residues-rich tracts occupy residues 196–206 and 274–288; these read SVSNPVNAVNE and SLAS…GKTN. Low complexity predominate over residues 289–303; sequence QQQPLPSQSQPQSLQ. 3 stretches are compositionally biased toward polar residues: residues 304–323, 329–339, and 404–419; these read NIGN…TFRN, QPSQDSVSEAG, and SLHS…STGI. Positions 473 to 489 are enriched in basic residues; that stretch reads QKKRKRSNRSSTSKKGK.

It belongs to the EDS1/RGT1 family.

It localises to the nucleus. The protein resides in the cytoplasm. Functionally, glucose-responsive transcription factor that regulates expression of several glucose transporter (HXT) genes in response to glucose. In the absence of glucose, it functions as a transcriptional repressor, whereas high concentrations of glucose cause it to function as a transcriptional activator. In cells growing on low levels of glucose, has a neutral role, neither repressing nor activating transcription. The chain is Glucose transport transcription regulator RGT1 (RGT1) from Kluyveromyces lactis (strain ATCC 8585 / CBS 2359 / DSM 70799 / NBRC 1267 / NRRL Y-1140 / WM37) (Yeast).